The following is a 295-amino-acid chain: Probable aspartoacylase (295 aa).

Positions 16 and 19 each coordinate Zn(2+). Substrate contacts are provided by residues Arg58 and 65–66 (NR). A Zn(2+)-binding site is contributed by His107. Glu166 and Tyr277 together coordinate substrate.

It belongs to the AspA/AstE family. Aspartoacylase subfamily. It depends on Zn(2+) as a cofactor.

The enzyme catalyses an N-acyl-L-aspartate + H2O = a carboxylate + L-aspartate. The chain is Probable aspartoacylase from Acaryochloris marina (strain MBIC 11017).